The primary structure comprises 339 residues: Probable G-protein coupled receptor 33 (339 aa).

Residues 1–30 (MDLINSSTHVINVSTSLTNSTGVPTPAPKT) are Extracellular-facing. Residues Asn5, Asn12, and Asn19 are each glycosylated (N-linked (GlcNAc...) asparagine). A helical membrane pass occupies residues 31 to 53 (IIAASLFMAFIIGVISNGLYLWM). Residues 54–64 (LQFKMQRTVNT) lie on the Cytoplasmic side of the membrane. A helical membrane pass occupies residues 65-86 (LLFFHLILSYFISTLILPFMAT). Topologically, residues 87-103 (SFLQDNHWVFGSVLCKA) are extracellular. Cysteines 101 and 179 form a disulfide. The chain crosses the membrane as a helical span at residues 104–124 (FNSTLSVSMFASVFFLSAISV). Topologically, residues 125–143 (ARYYLILHPVWSQQHRTPH) are cytoplasmic. The chain crosses the membrane as a helical span at residues 144-165 (WASRIALQIWISATILSIPYLV). Residues 166-209 (FRTTHDDHKGRIKCQNNYIVSTDWESKEHQTLGQWIHAACFVGR) lie on the Extracellular side of the membrane. A helical transmembrane segment spans residues 210–230 (FLLGFLLPFLVIIFCYKRVAT). Topologically, residues 231–246 (KMKEKGLFKSSKPFKV) are cytoplasmic. Residues 247 to 268 (MVTAVISFFVCWMPYHVHSGLV) traverse the membrane as a helical segment. Topologically, residues 269–283 (LTKSQPLPLHLTLGL) are extracellular. Residues 284–303 (AVVTISFNTVVSPVLYLFTG) form a helical membrane-spanning segment. Over 304–339 (ENFKVFKKSILALFNSTFSDISSTERTQTLNSETEI) the chain is Cytoplasmic.

Belongs to the G-protein coupled receptor 1 family. Expressed predominantly in lung, spleen and testis.

It localises to the cell membrane. Orphan receptor; could be a chemoattractant receptor. In Mus musculus (Mouse), this protein is Probable G-protein coupled receptor 33 (Gpr33).